The following is a 363-amino-acid chain: Aminomethyltransferase (363 aa).

This sequence belongs to the GcvT family. In terms of assembly, the glycine cleavage system is composed of four proteins: P, T, L and H.

It carries out the reaction N(6)-[(R)-S(8)-aminomethyldihydrolipoyl]-L-lysyl-[protein] + (6S)-5,6,7,8-tetrahydrofolate = N(6)-[(R)-dihydrolipoyl]-L-lysyl-[protein] + (6R)-5,10-methylene-5,6,7,8-tetrahydrofolate + NH4(+). The glycine cleavage system catalyzes the degradation of glycine. In Staphylococcus aureus (strain MRSA252), this protein is Aminomethyltransferase.